The chain runs to 251 residues: 1-(5-phosphoribosyl)-5-[(5-phosphoribosylamino)methylideneamino] imidazole-4-carboxamide isomerase (251 aa).

Aspartate 8 serves as the catalytic Proton acceptor. Catalysis depends on aspartate 131, which acts as the Proton donor.

This sequence belongs to the HisA/HisF family.

It localises to the cytoplasm. It carries out the reaction 1-(5-phospho-beta-D-ribosyl)-5-[(5-phospho-beta-D-ribosylamino)methylideneamino]imidazole-4-carboxamide = 5-[(5-phospho-1-deoxy-D-ribulos-1-ylimino)methylamino]-1-(5-phospho-beta-D-ribosyl)imidazole-4-carboxamide. It participates in amino-acid biosynthesis; L-histidine biosynthesis; L-histidine from 5-phospho-alpha-D-ribose 1-diphosphate: step 4/9. In Thiobacillus denitrificans (strain ATCC 25259 / T1), this protein is 1-(5-phosphoribosyl)-5-[(5-phosphoribosylamino)methylideneamino] imidazole-4-carboxamide isomerase.